Consider the following 387-residue polypeptide: Exodeoxyribonuclease 7 large subunit (387 aa).

It belongs to the XseA family. As to quaternary structure, heterooligomer composed of large and small subunits.

It localises to the cytoplasm. It catalyses the reaction Exonucleolytic cleavage in either 5'- to 3'- or 3'- to 5'-direction to yield nucleoside 5'-phosphates.. In terms of biological role, bidirectionally degrades single-stranded DNA into large acid-insoluble oligonucleotides, which are then degraded further into small acid-soluble oligonucleotides. This Campylobacter hominis (strain ATCC BAA-381 / DSM 21671 / CCUG 45161 / LMG 19568 / NCTC 13146 / CH001A) protein is Exodeoxyribonuclease 7 large subunit.